A 487-amino-acid chain; its full sequence is Protein translocase subunit SecY (487 aa).

Over 1–20 (MSWKDTAEPLLVRMPAVQRP) the chain is Cytoplasmic. A helical membrane pass occupies residues 21 to 47 (EGHVPFKRKLTWTGGVLLLYFFLTNVK). Residues 48 to 59 (LFGLDIDASQQV) lie on the Extracellular side of the membrane. An intramembrane region (helical) is located at residues 60-67 (FGRFSSIL). The chain crosses the membrane as a discontinuously helical span at residues 60–88 (FGRFSSILASGQGSIMQLGIGPIVTASIV). Residues 68-79 (ASGQGSIMQLGI) lie within the membrane without spanning it. Residues 80–88 (GPIVTASIV) constitute an intramembrane region (helical). At 89-110 (LQLLGGADLLGLNTQDDPRDQI) the chain is on the cytoplasmic side. The chain crosses the membrane as a helical span at residues 111-135 (LYQGLQKLLVLVMICLTGLPMVFAG). Over 136 to 153 (GFLPADTAVANSLGIGTA) the chain is Extracellular. A helical membrane pass occupies residues 154-178 (GVQWLIFAQMFVGGVLILFMDEVIS). Residues 179–184 (KWGVGS) lie on the Cytoplasmic side of the membrane. The chain crosses the membrane as a helical span at residues 185 to 203 (GIGLFIVAGVSQRLVGGLL). Topologically, residues 204–244 (TAPFLGNSEGIIYTWYLFITGERGTGPVLAADGLQTVLLQG) are extracellular. The helical transmembrane segment at 245-266 (ELLGLFTTVLIFAVVVYAESVR) threads the bilayer. Residues 267-291 (VEIPLSNARVKGARGRFPVKLIYAS) lie on the Cytoplasmic side of the membrane. The helical transmembrane segment at 292–313 (VLPMILVRALQANIQFLGRILN) threads the bilayer. At 314–364 (AQLGSMPAFLGTYANGQPTGGLFYFLAPIQSRGDWMWWLEGTAQPVWQILT) the chain is on the extracellular side. Residues 365–384 (RVGIDLFVMLVGGAVFAVFW) traverse the membrane as a helical segment. The Cytoplasmic portion of the chain corresponds to 385 to 427 (VETTDMGPEATAKQIHNSGMQIPGFRQNVGVIEKVLERYIPQV). A helical membrane pass occupies residues 428–446 (TVIGGALVGLLAVMANMLG). Over 447–451 (TIGGV) the chain is Extracellular. A helical transmembrane segment spans residues 452–466 (SGTGLLLTVSITYKL). The Cytoplasmic portion of the chain corresponds to 467–487 (YEEIAEEQLMEMHPMMRQMFG).

It belongs to the SecY/SEC61-alpha family. In terms of assembly, component of the Sec protein translocase complex. Heterotrimer consisting of alpha (SecY), beta (SecG) and gamma (SecE) subunits. The heterotrimers can form oligomers, although 1 heterotrimer is thought to be able to translocate proteins. Interacts with the ribosome. May interact with SecDF, and other proteins may be involved.

The protein localises to the cell membrane. The central subunit of the protein translocation channel SecYEG. Consists of two halves formed by TMs 1-5 and 6-10. These two domains form a lateral gate at the front which open onto the bilayer between TMs 2 and 7, and are clamped together by SecE at the back. The channel is closed by both a pore ring composed of hydrophobic SecY resides and a short helix (helix 2A) on the extracellular side of the membrane which forms a plug. The plug probably moves laterally to allow the channel to open. The ring and the pore may move independently. This is Protein translocase subunit SecY from Haloarcula marismortui (strain ATCC 43049 / DSM 3752 / JCM 8966 / VKM B-1809) (Halobacterium marismortui).